The primary structure comprises 167 residues: Putative NADH-quinone oxidoreductase subunit B 2 (167 aa).

It belongs to the complex I 20 kDa subunit family. As to quaternary structure, NDH-1 is composed of 14 different subunits. Subunits NuoB, C, D, E, F, and G constitute the peripheral sector of the complex.

It localises to the cell inner membrane. It carries out the reaction a quinone + NADH + 5 H(+)(in) = a quinol + NAD(+) + 4 H(+)(out). In terms of biological role, NDH-1 shuttles electrons from NADH, via FMN and iron-sulfur (Fe-S) centers, to quinones in the respiratory chain. Couples the redox reaction to proton translocation (for every two electrons transferred, four hydrogen ions are translocated across the cytoplasmic membrane), and thus conserves the redox energy in a proton gradient. The protein is Putative NADH-quinone oxidoreductase subunit B 2 of Burkholderia pseudomallei (strain 1710b).